A 428-amino-acid polypeptide reads, in one-letter code: Forkhead box protein B2 (428 aa).

A DNA-binding region (fork-head) is located at residues 12 to 103; it reads QKPPYSYISL…GDMFENGSFL (92 aa). Disordered regions lie at residues 118 to 217 and 408 to 428; these read HLHS…MQEA and PTAA…LVHS. The segment covering 136-163 has biased composition (basic residues); sequence LHPHHPHHAHHHHHHHHHAAHHHHHHHP. Pro residues-rich tracts occupy residues 164-174 and 183-192; these read PQPPPPPPPHM and APAPQPPHLP. Low complexity predominate over residues 193-217; that stretch reads SQPAQQPQPQSQPPQTSHPGKMQEA.

It localises to the nucleus. Functionally, transcription factor. The sequence is that of Forkhead box protein B2 (Foxb2) from Mus musculus (Mouse).